The primary structure comprises 1077 residues: Hemoglobin and hemoglobin-haptoglobin-binding protein A (1077 aa).

The N-terminal stretch at Met-1–Ala-24 is a signal peptide. The tract at residues Glu-25–Asn-72 is disordered. 11 tandem repeats follow at residues Pro-26–Gln-29, Pro-30–Gln-33, Pro-34–Gln-37, Pro-38–Gln-41, Pro-42–Gln-45, Pro-46–Gln-49, Pro-50–Gln-53, Pro-54–Gln-57, Pro-58–Gln-61, Pro-62–Gln-65, and Pro-66–Gln-69. Residues Pro-26–Gln-69 are 11 X 4 AA tandem repeats of P-T-N-Q. The segment covering Pro-26 to Asn-70 has biased composition (low complexity). Residues Glu-78–Ser-85 carry the TonB box motif. Positions Thr-89–Lys-216 constitute a TBDR plug domain. One can recognise a TBDR beta-barrel domain in the interval Asn-224–Phe-1077. Residues Asn-1060–Phe-1077 carry the TonB C-terminal box motif.

This sequence belongs to the TonB-dependent receptor family. Hemoglobin/haptoglobin binding protein subfamily.

The protein localises to the cell outer membrane. Its function is as follows. Acts as a receptor for hemoglobin or the hemoglobin/haptoglobin complex of the human host and is required for heme uptake. The polypeptide is Hemoglobin and hemoglobin-haptoglobin-binding protein A (hgpA) (Haemophilus influenzae).